The primary structure comprises 132 residues: MLKSSVIAAQYWAFFTFFFIAVSICVFMLSISWILGGRSSSRYKNTPFESGIVPTNTTNMYCSVKFYLVAIYFVLFDVEALYLYAWSVSIVECGWIGFIEALIFILFLLSGLIYLISSKLLVWKSKNNIHVT.

3 helical membrane passes run 14-34 (FFTF…ISWI), 66-86 (FYLV…LYAW), and 96-116 (IGFI…IYLI).

It belongs to the complex I subunit 3 family. NDH-1 is composed of 13 different subunits. Subunits NuoA, H, J, K, L, M, N constitute the membrane sector of the complex.

Its subcellular location is the cell membrane. The enzyme catalyses a quinone + NADH + 5 H(+)(in) = a quinol + NAD(+) + 4 H(+)(out). Its function is as follows. NDH-1 shuttles electrons from NADH, via FMN and iron-sulfur (Fe-S) centers, to quinones in the respiratory chain. The immediate electron acceptor for the enzyme in this species is believed to be ubiquinone. Couples the redox reaction to proton translocation (for every two electrons transferred, four hydrogen ions are translocated across the cytoplasmic membrane), and thus conserves the redox energy in a proton gradient. In Buchnera aphidicola subsp. Baizongia pistaciae (strain Bp), this protein is NADH-quinone oxidoreductase subunit A.